Here is a 180-residue protein sequence, read N- to C-terminus: ATP-dependent protease subunit HslV (180 aa).

Residue Thr2 is part of the active site. Na(+) is bound by residues Gly157, Cys160, and Thr163.

The protein belongs to the peptidase T1B family. HslV subfamily. As to quaternary structure, a double ring-shaped homohexamer of HslV is capped on each side by a ring-shaped HslU homohexamer. The assembly of the HslU/HslV complex is dependent on binding of ATP.

The protein localises to the cytoplasm. It carries out the reaction ATP-dependent cleavage of peptide bonds with broad specificity.. Allosterically activated by HslU binding. Protease subunit of a proteasome-like degradation complex believed to be a general protein degrading machinery. The sequence is that of ATP-dependent protease subunit HslV from Tolumonas auensis (strain DSM 9187 / NBRC 110442 / TA 4).